Here is a 400-residue protein sequence, read N- to C-terminus: Jasmonate-induced oxygenase 1 (400 aa).

The Fe2OG dioxygenase domain maps to 248–349 (DVGACLRVNY…RVSLAFFYNP (102 aa)). R254 contributes to the jasmonate binding site. 2-oxoglutarate-binding residues include N256 and Y258. 3 residues coordinate Fe cation: H273, D275, and H330. Residues R340 and S342 each coordinate 2-oxoglutarate. Residues R379 and R383 each coordinate jasmonate.

It belongs to the iron/ascorbate-dependent oxidoreductase family. The cofactor is L-ascorbate. Fe(2+) serves as cofactor.

The enzyme catalyses jasmonate + 2-oxoglutarate + O2 = (1R,2R)-12-hydroxyjasmonate + succinate + CO2. In terms of biological role, 2-oxoglutarate-dependent dioxygenase involved in the oxidation of jasmonate (JA), a stress-induced phytohormone synthesized in response to attack by pathogens and herbivores, which triggers the activation of defense responses via the JA-mediated signaling pathway. Converts JA to 12-hydroxyjasmonate (12OH-JA), an inactive form of JA. Prevents over-accumulation of JA and indirectly its bioactive form JA-Ile under stress response. Acts as a negative regulator of JA-mediated defense signaling, by contributing to 12OH-JA accumulation, which represses JA defense responses upon infection by the fungal pathogen Botrytis cinerea and the herbivorous caterpillar Mamestra brassicae. In Arabidopsis thaliana (Mouse-ear cress), this protein is Jasmonate-induced oxygenase 1.